A 67-amino-acid chain; its full sequence is Large ribosomal subunit protein bL32 (67 aa).

The segment covering 1–19 (MAVPKRKMSRANTRARRSQ) has biased composition (basic residues). Residues 1-21 (MAVPKRKMSRANTRARRSQWK) form a disordered region.

Belongs to the bacterial ribosomal protein bL32 family.

In Micrococcus luteus (strain ATCC 4698 / DSM 20030 / JCM 1464 / CCM 169 / CCUG 5858 / IAM 1056 / NBRC 3333 / NCIMB 9278 / NCTC 2665 / VKM Ac-2230) (Micrococcus lysodeikticus), this protein is Large ribosomal subunit protein bL32.